The sequence spans 1167 residues: DNA-directed RNA polymerase subunit beta (1167 aa).

The interval 1–27 is disordered; it reads MAVSPANQATAATTSAESRSEATGIPG. The span at 9–23 shows a compositional bias: low complexity; the sequence is ATAATTSAESRSEAT.

This sequence belongs to the RNA polymerase beta chain family. In terms of assembly, the RNAP catalytic core consists of 2 alpha, 1 beta, 1 beta' and 1 omega subunit. When a sigma factor is associated with the core the holoenzyme is formed, which can initiate transcription.

It carries out the reaction RNA(n) + a ribonucleoside 5'-triphosphate = RNA(n+1) + diphosphate. Its function is as follows. DNA-dependent RNA polymerase catalyzes the transcription of DNA into RNA using the four ribonucleoside triphosphates as substrates. The sequence is that of DNA-directed RNA polymerase subunit beta from Amycolatopsis mediterranei (strain S699) (Nocardia mediterranei).